Consider the following 362-residue polypeptide: Cobalt-precorrin-5B C(1)-methyltransferase (362 aa).

It belongs to the CbiD family.

It catalyses the reaction Co-precorrin-5B + S-adenosyl-L-methionine = Co-precorrin-6A + S-adenosyl-L-homocysteine. It participates in cofactor biosynthesis; adenosylcobalamin biosynthesis; cob(II)yrinate a,c-diamide from sirohydrochlorin (anaerobic route): step 6/10. Functionally, catalyzes the methylation of C-1 in cobalt-precorrin-5B to form cobalt-precorrin-6A. This Methanocaldococcus jannaschii (strain ATCC 43067 / DSM 2661 / JAL-1 / JCM 10045 / NBRC 100440) (Methanococcus jannaschii) protein is Cobalt-precorrin-5B C(1)-methyltransferase.